The primary structure comprises 458 residues: Monomethylamine methyltransferase MtmB1 (458 aa).

A non-standard amino acid (pyrrolysine) is located at residue Pyl202.

This sequence belongs to the monomethylamine methyltransferase family.

It carries out the reaction Co(I)-[methylamine-specific corrinoid protein] + methylamine + H(+) = methyl-Co(III)-[methylamine-specific corrinoid protein] + NH4(+). The protein operates within one-carbon metabolism; methanogenesis from methylamine. Catalyzes the transfer of the methyl group from monomethylamine to the corrinoid cofactor of MtmC. The chain is Monomethylamine methyltransferase MtmB1 (mtmB1) from Methanosarcina barkeri (strain Fusaro / DSM 804).